Here is a 135-residue protein sequence, read N- to C-terminus: RxLR effector protein Avh5 (135 aa).

Residues 1 to 19 (MRLQFFLVMAVATLATISA) form the signal peptide. Positions 43–71 (RFLRTADTDIVYEPKVHNPGKKQVFIEDK) match the RxLR-dEER motif. Residues Lys-81, Lys-83, and Lys-84 each contribute to the a 1,2-diacyl-sn-glycero-3-phospho-(1D-myo-inositol-3-phosphate) site.

Belongs to the RxLR effector family.

It localises to the secreted. Its subcellular location is the host cell. In terms of biological role, effector that suppresses plant defense responses during the early stages of pathogen infection. Suppresses cell death induced by effectors and PAMPs in plant hosts. The protein is RxLR effector protein Avh5 of Phytophthora sojae (Soybean stem and root rot agent).